A 122-amino-acid chain; its full sequence is LYR motif-containing protein 1 (122 aa).

This sequence belongs to the complex I LYR family.

The chain is LYR motif-containing protein 1 (lyrm1) from Xenopus laevis (African clawed frog).